We begin with the raw amino-acid sequence, 105 residues long: Putative membrane protein insertion efficiency factor (105 aa).

It belongs to the UPF0161 family.

It is found in the cell membrane. In terms of biological role, could be involved in insertion of integral membrane proteins into the membrane. This chain is Putative membrane protein insertion efficiency factor, found in Bifidobacterium longum (strain NCC 2705).